The following is a 755-amino-acid chain: Xaa-Pro dipeptidyl-peptidase (755 aa).

Active-site charge relay system residues include serine 348, aspartate 468, and histidine 498.

It belongs to the peptidase S15 family. Homodimer.

Its subcellular location is the cytoplasm. It carries out the reaction Hydrolyzes Xaa-Pro-|- bonds to release unblocked, N-terminal dipeptides from substrates including Ala-Pro-|-p-nitroanilide and (sequentially) Tyr-Pro-|-Phe-Pro-|-Gly-Pro-|-Ile.. Its function is as follows. Removes N-terminal dipeptides sequentially from polypeptides having unsubstituted N-termini provided that the penultimate residue is proline. This is Xaa-Pro dipeptidyl-peptidase from Streptococcus thermophilus (strain ATCC BAA-250 / LMG 18311).